We begin with the raw amino-acid sequence, 574 residues long: uncharacterized protein (574 aa).

The tract at residues 297 to 317 (SAASKPRKRKKDEVSGAQVNS) is disordered.

This is an uncharacterized protein from Mus musculus (Mouse).